We begin with the raw amino-acid sequence, 284 residues long: Protein SIC1 (284 aa).

The interval 1–89 is disordered; the sequence is MTPSTPPRSR…SPFPKSSVKR (89 aa). Thr5 is subject to Phosphothreonine; by PHO85. Polar residues-rich tracts occupy residues 18 to 52 and 61 to 79; these read PSGN…TKSF and PNSN…SPQR. Thr33 is modified (phosphothreonine). Residue Ser76 is modified to Phosphoserine. Thr173 bears the Phosphothreonine mark. 2 positions are modified to phosphoserine: Ser198 and Ser201. Lysine derivative occurs at positions 268, 272, and 274.

In terms of assembly, interacts with HOG1. Post-translationally, phosphorylated by cyclin-dependent kinases CDC28 and PHO85 in association with G1-cyclins, promoting degradation of SIC1 and exit form G1. May contain a covalently attached chromophore. In terms of processing, the N-terminus is blocked.

Its subcellular location is the cytoplasm. The protein localises to the nucleus. Substrate and inhibitor of the cyclin-dependent protein kinase CDC28. Its activity could be important for faithful segregation of chromosomes to daughter cells. It acts in response to a signal from a post-start checkpoint. This chain is Protein SIC1 (SIC1), found in Saccharomyces cerevisiae (strain ATCC 204508 / S288c) (Baker's yeast).